The chain runs to 405 residues: Deoxyguanosinetriphosphate triphosphohydrolase-like protein (405 aa).

Residues 75–219 (RLTHTIEVAQ…AAIADDIAYN (145 aa)) form the HD domain.

This sequence belongs to the dGTPase family. Type 2 subfamily.

This Sinorhizobium medicae (strain WSM419) (Ensifer medicae) protein is Deoxyguanosinetriphosphate triphosphohydrolase-like protein.